A 384-amino-acid chain; its full sequence is Cyclohexane-1-carbonyl-CoA dehydrogenase (384 aa).

It belongs to the acyl-CoA dehydrogenase family. As to quaternary structure, homotetramer. Requires FAD as cofactor.

It carries out the reaction cyclohexane-1-carbonyl-CoA + oxidized [electron-transfer flavoprotein] + H(+) = cyclohex-1-ene-1-carbonyl-CoA + reduced [electron-transfer flavoprotein]. Functionally, mediates the conversion of cyclohexane-1-carbonyl-CoA (ChCoA) into cyclohex-1-ene-1-carbonyl-CoA in biosynthesis of cyclohexane-1-carboxylate, a by-product produced during fermentation of benzoate and crotonate to acetate. The polypeptide is Cyclohexane-1-carbonyl-CoA dehydrogenase (Syntrophus aciditrophicus (strain SB)).